The sequence spans 364 residues: tRNA N6-adenosine threonylcarbamoyltransferase (364 aa).

H115 and H119 together coordinate Fe cation. Substrate is bound by residues 137-141 (LVSGG), D170, G183, and N288. D316 contacts Fe cation.

Belongs to the KAE1 / TsaD family. The cofactor is Fe(2+).

Its subcellular location is the cytoplasm. The enzyme catalyses L-threonylcarbamoyladenylate + adenosine(37) in tRNA = N(6)-L-threonylcarbamoyladenosine(37) in tRNA + AMP + H(+). Required for the formation of a threonylcarbamoyl group on adenosine at position 37 (t(6)A37) in tRNAs that read codons beginning with adenine. Is involved in the transfer of the threonylcarbamoyl moiety of threonylcarbamoyl-AMP (TC-AMP) to the N6 group of A37, together with TsaE and TsaB. TsaD likely plays a direct catalytic role in this reaction. The sequence is that of tRNA N6-adenosine threonylcarbamoyltransferase from Bartonella tribocorum (strain CIP 105476 / IBS 506).